A 1093-amino-acid chain; its full sequence is Small G protein signaling modulator 1 (1093 aa).

One can recognise an RUN domain in the interval 36–190 (HEDSSHIISF…EYTKMKTADH (155 aa)). The interval 256–297 (LLYGKNNVLVQPRDDMEAVPGYLSLHQTADVMTLKWTPNQLM) is important for interaction with RAB9A and RAB9B. A required for interaction with RAP family members region spans residues 301–350 (VGDLDYEKSVYWDYAVTIRLEEIVYLHCHQQVDSGGTVVLVSQDGIQRPP). Disordered regions lie at residues 377–412 (DPPL…KEDD), 645–778 (DSTI…ELAV), and 810–838 (DGAV…EEPE). Over residues 385-397 (GKGKVFPKLRKRS) the composition is skewed to basic residues. The region spanning 562–1026 (GVQPEIRRAV…SVWETIWAAK (465 aa)) is the Rab-GAP TBC domain. The segment covering 647-676 (TISNESSQSCSSGRQNLRLQSDSSSSTQVF) has biased composition (polar residues). Over residues 687–696 (AEGRSEEKHP) the composition is skewed to basic and acidic residues. Polar residues predominate over residues 702 to 736 (NPANGTCSPDSGHPSSHNFSSGLSEHSEPSLSTED). 2 stretches are compositionally biased toward basic and acidic residues: residues 766–776 (TSRDEAPREEL) and 820–829 (EADKPSRADS).

This sequence belongs to the RUTBC family. As to quaternary structure, interacts with RAB9A (GTP-bound form) and RAB9B. Interacts with RAB3A, RAB4A, RAB5A, RAB8A, RAB11A, RAP1A, RAP1B, RAP2A and RAP2B. No interaction with RAB27A. Expressed only in brain.

Its subcellular location is the golgi apparatus. The protein resides in the trans-Golgi network. It localises to the cytoplasm. The protein localises to the cytoplasmic vesicle membrane. Functionally, interacts with numerous Rab family members, functioning as Rab effector for some, and as GTPase activator for others. Promotes GTP hydrolysis by RAB34 and RAB36. Probably functions as a GTPase effector with RAB9A and RAB9B; does not stimulate GTP hydrolysis with RAB9A and RAB9B. The polypeptide is Small G protein signaling modulator 1 (Sgsm1) (Mus musculus (Mouse)).